Here is a 264-residue protein sequence, read N- to C-terminus: Probable mobile endonuclease B (264 aa).

Positions 25 to 50 (TYYTETHHIIPRCMGGTDDKTNLVLL) constitute an HNH domain.

The protein to phage T4 mobC and mobD.

The sequence is that of Probable mobile endonuclease B (mobB) from Escherichia coli (Bacteriophage T4).